The sequence spans 1439 residues: Receptor-type tyrosine-protein phosphatase kappa (1439 aa).

Residues 1-26 (MDTTAAAALPAFVALLLLSPWPLLGS) form the signal peptide. At 27 to 752 (AQGQFSAGGC…PAKQTDRVVK (726 aa)) the chain is on the extracellular side. The MAM domain occupies 31-194 (FSAGGCTFDD…IQVLSYPCDK (164 aa)). N-linked (GlcNAc...) asparagine glycans are attached at residues Asn-101, Asn-140, and Asn-211. The Ig-like C2-type domain maps to 196–281 (PHFLRLGDVE…TQSERGSGVS (86 aa)). A disulfide bridge connects residues Cys-216 and Cys-270. 4 consecutive Fibronectin type-III domains span residues 294 to 389 (PIAP…CAEP), 392 to 488 (TPKT…TDED), 491 to 595 (GPVP…SAPT), and 597 to 680 (PDYE…GNLP). 9 N-linked (GlcNAc...) asparagine glycosylation sites follow: Asn-416, Asn-424, Asn-436, Asn-462, Asn-552, Asn-586, Asn-590, Asn-607, and Asn-690. The helical transmembrane segment at 753–774 (IAGISAGILVFILLLLVVILIV) threads the bilayer. The Cytoplasmic portion of the chain corresponds to 775 to 1439 (KKSKLAKKRK…DVALEYLESS (665 aa)). Ser-856 bears the Phosphoserine mark. 2 Tyrosine-protein phosphatase domains span residues 887–1141 (FKEE…ILEA) and 1173–1435 (LKDE…ALEY). Substrate-binding positions include Asp-1050, 1082 to 1088 (CSAGAGR), and Gln-1126. The active-site Phosphocysteine intermediate is Cys-1082. Cys-1376 acts as the Phosphocysteine intermediate in catalysis.

This sequence belongs to the protein-tyrosine phosphatase family. Receptor class 2B subfamily. Post-translationally, this protein undergoes proteolytic processing. As to expression, high levels in lung, brain and colon; less in liver, pancreas, stomach, kidney, placenta and mammary carcinoma.

The protein localises to the cell junction. It localises to the adherens junction. The protein resides in the cell membrane. The enzyme catalyses O-phospho-L-tyrosyl-[protein] + H2O = L-tyrosyl-[protein] + phosphate. In terms of biological role, regulation of processes involving cell contact and adhesion such as growth control, tumor invasion, and metastasis. Negative regulator of EGFR signaling pathway. Forms complexes with beta-catenin and gamma-catenin/plakoglobin. Beta-catenin may be a substrate for the catalytic activity of PTPRK/PTP-kappa. The sequence is that of Receptor-type tyrosine-protein phosphatase kappa (PTPRK) from Homo sapiens (Human).